The sequence spans 310 residues: Conjugation stage-specific protein (310 aa).

The protein belongs to the archaeal Rpo3/eukaryotic RPB3 RNA polymerase subunit family.

It is found in the nucleus. Functionally, may be a stage-specific RNA polymerase subunit. In Tetrahymena thermophila, this protein is Conjugation stage-specific protein (CNJC).